The following is a 331-amino-acid chain: Probable allantoicase (331 aa).

Belongs to the allantoicase family.

It carries out the reaction allantoate + H2O = (S)-ureidoglycolate + urea. The protein operates within nitrogen metabolism; (S)-allantoin degradation; (S)-ureidoglycolate from allantoate (aminidohydrolase route): step 1/1. The chain is Probable allantoicase from Pseudomonas fluorescens (strain SBW25).